A 262-amino-acid chain; its full sequence is Protein BcsX (262 aa).

The protein operates within glycan metabolism; bacterial cellulose biosynthesis. The polypeptide is Protein BcsX (bcsX) (Komagataeibacter xylinus (Gluconacetobacter xylinus)).